The primary structure comprises 1009 residues: Cilia- and flagella-associated protein 70 (1009 aa).

Residues 410-428 (NLKEDKPVKEKDIDGRPRP) show a composition bias toward basic and acidic residues. Residues 410-457 (NLKEDKPVKEKDIDGRPRPGDVQAPSIKSQSSDTPLEGEPPLSHNPEG) are disordered. TPR repeat units lie at residues 498–531 (PPLT…EYYR), 635–668 (SEQL…EPQN), 669–702 (LDHW…NQSH), 704–736 (HSLL…EPTN), 888–921 (HFIF…SPSC), 923–954 (TWLG…NNYN), and 956–988 (EVWA…KLKD).

Belongs to the CFAP70 family.

The protein resides in the cell projection. It localises to the cilium. Its subcellular location is the flagellum. It is found in the cytoplasm. The protein localises to the cytoskeleton. The protein resides in the flagellum basal body. It localises to the cilium axoneme. Axoneme-binding protein that plays a role in the regulation of ciliary motility and cilium length. In Macaca fascicularis (Crab-eating macaque), this protein is Cilia- and flagella-associated protein 70.